The primary structure comprises 1088 residues: RNA-directed RNA polymerase (1088 aa).

One can recognise a RdRp catalytic domain in the interval 501–687 (LSYGDVTRFL…AKRYIAGGKI (187 aa)).

The protein belongs to the reoviridae RNA-directed RNA polymerase family. In terms of assembly, interacts with VP3 (Potential). Interacts with VP2; this interaction activates VP1. Interacts with NSP5; this interaction is probably necessary for the formation of functional virus factories. Interacts with NSP2; this interaction is weak. The cofactor is Mg(2+).

Its subcellular location is the virion. The enzyme catalyses RNA(n) + a ribonucleoside 5'-triphosphate = RNA(n+1) + diphosphate. Functionally, RNA-directed RNA polymerase that is involved in both transcription and genome replication. Together with VP3 capping enzyme, forms an enzyme complex positioned near the channels situated at each of the five-fold vertices of the core. Following infection, the outermost layer of the virus is lost, leaving a double-layered particle (DLP) made up of the core and VP6 shell. VP1 then catalyzes the transcription of fully conservative plus-strand genomic RNAs that are extruded through the DLP's channels into the cytoplasm where they function as mRNAs for translation of viral proteins. One copy of each of the viral (+)RNAs is also recruited during core assembly, together with newly synthesized polymerase complexes and VP2. The polymerase of these novo-formed particles catalyzes the synthesis of complementary minus-strands leading to dsRNA formation. To do so, the polymerase specifically recognizes and binds 4 bases 5'-UGUG-3' in the conserved 3'-sequence of plus-strand RNA templates. VP2 presumably activates the autoinhibited VP1-RNA complex to coordinate packaging and genome replication. Once dsRNA synthesis is complete, the polymerase switches to the transcriptional mode, thus providing secondary transcription. The sequence is that of RNA-directed RNA polymerase from Homo sapiens (Human).